The chain runs to 106 residues: Large ribosomal subunit protein eL42 (106 aa).

Positions 12, 17, 74, and 77 each coordinate Zn(2+).

Belongs to the eukaryotic ribosomal protein eL42 family. Component of the large ribosomal subunit. Mature ribosomes consist of a small (40S) and a large (60S) subunit. The 40S subunit contains about 32 different proteins and 1 molecule of RNA (18S). The 60S subunit contains 45 different proteins and 3 molecules of RNA (25S, 5.8S and 5S). The cofactor is Zn(2+).

The protein resides in the cytoplasm. Functionally, component of the ribosome, a large ribonucleoprotein complex responsible for the synthesis of proteins in the cell. The small ribosomal subunit (SSU) binds messenger RNAs (mRNAs) and translates the encoded message by selecting cognate aminoacyl-transfer RNA (tRNA) molecules. The large subunit (LSU) contains the ribosomal catalytic site termed the peptidyl transferase center (PTC), which catalyzes the formation of peptide bonds, thereby polymerizing the amino acids delivered by tRNAs into a polypeptide chain. The nascent polypeptides leave the ribosome through a tunnel in the LSU and interact with protein factors that function in enzymatic processing, targeting, and the membrane insertion of nascent chains at the exit of the ribosomal tunnel. The sequence is that of Large ribosomal subunit protein eL42 (RPL44) from Candida albicans (strain SC5314 / ATCC MYA-2876) (Yeast).